Consider the following 759-residue polypeptide: Cullin-4A (759 aa).

The disordered stretch occupies residues M1 to S40. K8 is covalently cross-linked (Glycyl lysine isopeptide (Lys-Gly) (interchain with G-Cter in SUMO2)). S10 carries the post-translational modification Phosphoserine. Residues G20 to P31 show a composition bias toward low complexity. Residue K33 forms a Glycyl lysine isopeptide (Lys-Gly) (interchain with G-Cter in ubiquitin) linkage. The region spanning D691–D750 is the Cullin neddylation domain. A Glycyl lysine isopeptide (Lys-Gly) (interchain with G-Cter in NEDD8) cross-link involves residue K705.

The protein belongs to the cullin family. Can self-associate. Component of multiple DCX (DDB1-CUL4-X-box) E3 ubiquitin-protein ligase complexes that seem to consist of DDB1, CUL4A or CUL4B, RBX1 and a variable substrate recognition component which seems to belong to a protein family described as DCAF (Ddb1- and Cul4-associated factor) or CDW (CUL4-DDB1-associated WD40-repeat) proteins. Component of the CSA complex (DCX(ERCC8) complex) containing ERCC8, RBX1, DDB1 and CUL4A; the CSA complex interacts with RNA polymerase II; upon UV irradiation it interacts with the COP9 signalosome and preferentially with the hyperphosphorylated form of RNA polymerase II. Component of the DCX(DET1-COP1) complex with the substrate recognition component DET1 and COP1. Component of the DCX(DDB2) complex with the substrate recognition component DDB2. Component of the DCX(DTL) complex with the putative substrate recognition component DTL. Component of DCX complexes part of the DesCEND (destruction via C-end degrons) pathway, which contain either TRPC4AP or DCAF12 as substrate-recognition component. Component of the DCX(AMBRA1) complex with the substrate recognition component AMBRA1. Interacts with DDB1, RBX1, RNF7, CDT1, TIP120A/CAND1, SKP2, CDKN1B, MDM2, TP53 and HOXA9. Interacts with DDB2; the interactions with DDB2 and CAND1 are mutually exclusive. Interacts with DCAF1, DTL, DDA1, DCAF6, DCAF4, DCAF16, DCAF17, DET1, WDTC1, DCAF5, DCAF11, WDR24A, COP1, PAFAH1B1, ERCC8, GRWD1, FBXW5, RBBP7, GNB2, WSB1, WSB2, NUP43, PWP1, FBXW8, ATG16L1, KATNB1, RBBP4, RBBP5, LRWD1 and DCAF8. May interact with WDR26, WDR51B, SNRNP40, WDR61, WDR76, WDR5. Interacts (when neddylated) with ARIH1; leading to activate the E3 ligase activity of ARIH1. The DDB1-CUL4A complex interacts with CRY1. Interacts (unneddylated form) with DCUN1D1, DCUN1D2, DCUN1D3, DCUN1D4 and DCUN1D5; these interactions promote the cullin neddylation. In terms of assembly, (Microbial infection) Interacts with murine cytomegalovirus M48. Post-translationally, neddylated; required for activity of cullin-RING-based E3 ubiquitin-protein ligase complexes. Deneddylated via its interaction with the COP9 signalosome (CSN) complex. (Microbial infection) Deneddylated by murine cytomegalovirus M48 leading to a S-phase-like environment that is required for efficient replication of the viral genome. In terms of tissue distribution, expressed in oocytes (at protein level). In the ovary, also expressed in cumulus cells. Expressed in testis, spleen and kidney.

It functions in the pathway protein modification; protein ubiquitination. In terms of biological role, core component of multiple cullin-RING-based E3 ubiquitin-protein ligase complexes which mediate the ubiquitination of target proteins. As a scaffold protein may contribute to catalysis through positioning of the substrate and the ubiquitin-conjugating enzyme. The E3 ubiquitin-protein ligase activity of the complex is dependent on the neddylation of the cullin subunit and is inhibited by the association of the deneddylated cullin subunit with TIP120A/CAND1. The functional specificity of the E3 ubiquitin-protein ligase complex depends on the variable substrate recognition component. DCX(DET1-COP1) directs ubiquitination of JUN. DCX(DDB2) directs ubiquitination of XPC. DCX(DDB2) ubiquitinates histones H3-H4 and is required for efficient histone deposition during replication-coupled (H3.1) and replication-independent (H3.3) nucleosome assembly, probably by facilitating the transfer of H3 from ASF1A/ASF1B to other chaperones involved in histone deposition. DCX(DTL) plays a role in PCNA-dependent polyubiquitination of CDT1 and MDM2-dependent ubiquitination of p53/TP53 in response to radiation-induced DNA damage and during DNA replication. DCX(DTL) directs autoubiquitination of DTL. In association with DDB1 and SKP2 probably is involved in ubiquitination of CDKN1B/p27kip. Is involved in ubiquitination of HOXA9. The DDB1-CUL4A-DTL E3 ligase complex regulates the circadian clock function by mediating the ubiquitination and degradation of CRY1. The DCX(ERCC8) complex (also named CSA complex) plays a role in transcription-coupled repair (TCR). A number of DCX complexes (containing either TRPC4AP or DCAF12 as substrate-recognition component) are part of the DesCEND (destruction via C-end degrons) pathway, which recognizes a C-degron located at the extreme C terminus of target proteins, leading to their ubiquitination and degradation. With CUL4B, contributes to ribosome biogenesis. The DCX(AMBRA1) complex is a master regulator of the transition from G1 to S cell phase by mediating ubiquitination of phosphorylated cyclin-D (CCND1, CCND2 and CCND3). The DCX(AMBRA1) complex also acts as a regulator of Cul5-RING (CRL5) E3 ubiquitin-protein ligase complexes by mediating ubiquitination and degradation of Elongin-C (ELOC) component of CRL5 complexes. The chain is Cullin-4A from Mus musculus (Mouse).